Consider the following 159-residue polypeptide: Transcriptional repressor NrdR (159 aa).

Polar residues predominate over residues 1–11 (MQCPTCQNTDS). Positions 1-21 (MQCPTCQNTDSRVLESRSADS) are disordered. Residues 3–34 (CPTCQNTDSRVLESRSADSGKSVRRRRECLNC) fold into a zinc finger. Positions 49 to 139 (VSVMKKDGSR…VYRKFNGVKD (91 aa)) constitute an ATP-cone domain.

Belongs to the NrdR family. Zn(2+) serves as cofactor.

Negatively regulates transcription of bacterial ribonucleotide reductase nrd genes and operons by binding to NrdR-boxes. The chain is Transcriptional repressor NrdR from Prochlorococcus marinus (strain MIT 9215).